Consider the following 292-residue polypeptide: 4-diphosphocytidyl-2-C-methyl-D-erythritol kinase (292 aa).

The active site involves K11. 95–105 (PVSAGLAGGSS) contacts ATP. The active site involves D137.

This sequence belongs to the GHMP kinase family. IspE subfamily.

It carries out the reaction 4-CDP-2-C-methyl-D-erythritol + ATP = 4-CDP-2-C-methyl-D-erythritol 2-phosphate + ADP + H(+). Its pathway is isoprenoid biosynthesis; isopentenyl diphosphate biosynthesis via DXP pathway; isopentenyl diphosphate from 1-deoxy-D-xylulose 5-phosphate: step 3/6. Catalyzes the phosphorylation of the position 2 hydroxy group of 4-diphosphocytidyl-2C-methyl-D-erythritol. This Alkaliphilus oremlandii (strain OhILAs) (Clostridium oremlandii (strain OhILAs)) protein is 4-diphosphocytidyl-2-C-methyl-D-erythritol kinase.